We begin with the raw amino-acid sequence, 364 residues long: Formimidoylglutamase (364 aa).

Positions 133, 189, 191, 193, 286, and 288 each coordinate Mn(2+).

This sequence belongs to the arginase family. Mn(2+) serves as cofactor.

The catalysed reaction is N-formimidoyl-L-glutamate + H2O = formamide + L-glutamate. It participates in amino-acid degradation; L-histidine degradation into L-glutamate; L-glutamate from N-formimidoyl-L-glutamate (hydrolase route): step 1/1. In terms of biological role, catalyzes the conversion of N-formimidoyl-L-glutamate to L-glutamate and formamide. This Photobacterium profundum (strain SS9) protein is Formimidoylglutamase.